A 60-amino-acid polypeptide reads, in one-letter code: Large ribosomal subunit protein uL30 (60 aa).

The protein belongs to the universal ribosomal protein uL30 family. As to quaternary structure, part of the 50S ribosomal subunit.

The polypeptide is Large ribosomal subunit protein uL30 (Lactobacillus johnsonii (strain CNCM I-12250 / La1 / NCC 533)).